The primary structure comprises 475 residues: UDP-N-acetylmuramate--L-alanine ligase (475 aa).

112-118 serves as a coordination point for ATP; the sequence is GTHGKTT.

Belongs to the MurCDEF family.

It localises to the cytoplasm. It carries out the reaction UDP-N-acetyl-alpha-D-muramate + L-alanine + ATP = UDP-N-acetyl-alpha-D-muramoyl-L-alanine + ADP + phosphate + H(+). It participates in cell wall biogenesis; peptidoglycan biosynthesis. Functionally, cell wall formation. This Paracidovorax citrulli (strain AAC00-1) (Acidovorax citrulli) protein is UDP-N-acetylmuramate--L-alanine ligase.